A 336-amino-acid polypeptide reads, in one-letter code: MNAPRLTDTTLRDGSHAMRHMFTRQHVRDIVTALDRAGVPVIEVTHGDGLAGSSLQYGFSFVSDLDLIAEARESAERARIAALLLPGIGTRRELKAAVERGVQVLRIATQCTEADISEEHFKMAKDMGLETVGFLMMSHMRSPEFLAEQALLMESYGADCVYVVDSAGAMLPRDAAARVRALKDTLRVQVGFHAHNNLGLGIGNTLAALEAGADQIDGCLRGLGAGAGNAATELLAAVLDRLGVNPGLDVLALMDAAEYVVAPIMPFQPFPDRDAITIGYAGVYSTFLLHAKRVGEQLGVDPRAILIELGRRQTVAGQEDWILDVALELVRKRERA.

Positions 4 to 254 (PRLTDTTLRD…NPGLDVLALM (251 aa)) constitute a Pyruvate carboxyltransferase domain. Substrate is bound at residue 12 to 13 (RD). Mn(2+) is bound at residue aspartate 13. Residue histidine 16 is the Proton acceptor of the active site. 2 residues coordinate substrate: serine 166 and histidine 193. Histidine 193 and histidine 195 together coordinate Mn(2+). Tyrosine 284 provides a ligand contact to substrate.

It belongs to the 4-hydroxy-2-oxovalerate aldolase family.

The enzyme catalyses (S)-4-hydroxy-2-oxopentanoate = acetaldehyde + pyruvate. The chain is 4-hydroxy-2-oxovalerate aldolase from Roseiflexus castenholzii (strain DSM 13941 / HLO8).